A 77-amino-acid chain; its full sequence is MAKLSCSYFLVLILVFSAFLMVERAEGKRCHLTIDKATACSLSDCRLSCYSGYNGVGKCFDDPKVAGPSNCGCIYNC.

A signal peptide spans 1–27; that stretch reads MAKLSCSYFLVLILVFSAFLMVERAEG. 4 disulfides stabilise this stretch: C30–C77, C40–C59, C45–C71, and C49–C73.

Belongs to the DEFL family.

Its subcellular location is the secreted. This Arabidopsis thaliana (Mouse-ear cress) protein is Defensin-like protein 159 (LCR25).